Reading from the N-terminus, the 346-residue chain is ATP-dependent 6-phosphofructokinase (346 aa).

ATP contacts are provided by residues Gly13, 76–77, and 106–109; these read RL and GEGT. Mg(2+) is bound at residue Glu107. Substrate-binding positions include 129-131, Arg166, 173-175, Glu226, Arg270, and 276-279; these read TID, MGR, and HIQR. The Proton acceptor role is filled by Asp131.

It belongs to the phosphofructokinase type A (PFKA) family. Mixed-substrate PFK group III subfamily. As to quaternary structure, homodimer or homotetramer. Requires Mg(2+) as cofactor.

It is found in the cytoplasm. The enzyme catalyses beta-D-fructose 6-phosphate + ATP = beta-D-fructose 1,6-bisphosphate + ADP + H(+). The protein operates within carbohydrate degradation; glycolysis; D-glyceraldehyde 3-phosphate and glycerone phosphate from D-glucose: step 3/4. Its function is as follows. Catalyzes the phosphorylation of D-fructose 6-phosphate to fructose 1,6-bisphosphate by ATP, the first committing step of glycolysis. The sequence is that of ATP-dependent 6-phosphofructokinase from Corynebacterium efficiens (strain DSM 44549 / YS-314 / AJ 12310 / JCM 11189 / NBRC 100395).